The sequence spans 441 residues: Transcriptional regulatory protein ZraR (441 aa).

The 115-residue stretch at 7-121 (DILVVDDDIS…NLQATLEKAL (115 aa)) folds into the Response regulatory domain. The residue at position 56 (Asp-56) is a 4-aspartylphosphate. Positions 141–370 (MVGKSPAMQH…LENAVERAVV (230 aa)) constitute a Sigma-54 factor interaction domain. ATP is bound by residues Gly-172, Thr-173, Arg-329, and Arg-359. Residues 421–440 (KTEAARQLGITRKTLLAKLS) constitute a DNA-binding region (H-T-H motif).

In terms of assembly, monomer. Phosphorylated by ZraS.

It is found in the cytoplasm. Its activity is regulated as follows. Activity of the ZraS/ZraR two-component system is repressed by the zinc-bound form of ZraP, which probably interacts with the periplasmic region of ZraS. In terms of biological role, part of the Zra signaling pathway, an envelope stress response (ESR) system composed of the periplasmic accessory protein ZraP, the histidine kinase ZraS and the transcriptional regulator ZraR. The ZraPSR system contributes to antibiotic resistance and is important for membrane integrity in the presence of membrane-targeting biocides. ZraR is a member of the two-component regulatory system ZraS/ZraR. When activated by ZraS, acts in conjunction with sigma-54 to regulate the expression of zraP in the presence of high Zn(2+) or Pb(2+) concentrations. Also positively autoregulates the expression of the zraSR operon. Binds to a region within the zraP-zraSR intergenic region that is characterized by two inverted repeats separated by a 14 bp spacer. In addition, controls a regulon of genes of diverse functions that may be critical to maintain envelope integrity and cell survival under stressful conditions. The system has no direct role in zinc or copper resistance. The protein is Transcriptional regulatory protein ZraR of Escherichia coli (strain K12).